The sequence spans 126 residues: Small ribosomal subunit protein bS6 (126 aa).

Residues 107-126 form a disordered region; it reads RDRERGERSERPRDDFAPAA.

Belongs to the bacterial ribosomal protein bS6 family.

Its function is as follows. Binds together with bS18 to 16S ribosomal RNA. This chain is Small ribosomal subunit protein bS6, found in Caulobacter sp. (strain K31).